A 275-amino-acid polypeptide reads, in one-letter code: Putative phosphoenolpyruvate synthase regulatory protein (275 aa).

157–164 (GVSRCGKT) contacts ADP.

The protein belongs to the pyruvate, phosphate/water dikinase regulatory protein family. PSRP subfamily.

The catalysed reaction is [pyruvate, water dikinase] + ADP = [pyruvate, water dikinase]-phosphate + AMP + H(+). The enzyme catalyses [pyruvate, water dikinase]-phosphate + phosphate + H(+) = [pyruvate, water dikinase] + diphosphate. Its function is as follows. Bifunctional serine/threonine kinase and phosphorylase involved in the regulation of the phosphoenolpyruvate synthase (PEPS) by catalyzing its phosphorylation/dephosphorylation. This chain is Putative phosphoenolpyruvate synthase regulatory protein, found in Bordetella bronchiseptica (strain ATCC BAA-588 / NCTC 13252 / RB50) (Alcaligenes bronchisepticus).